We begin with the raw amino-acid sequence, 402 residues long: uncharacterized protein (402 aa).

This sequence belongs to the peptidase M20 family.

This is an uncharacterized protein from Sinorhizobium fredii (strain NBRC 101917 / NGR234).